Consider the following 257-residue polypeptide: NAD-capped RNA hydrolase NudC (257 aa).

Residues lysine 25 and arginine 69 each coordinate substrate. The Zn(2+) site is built by cysteine 98 and cysteine 101. Glutamate 111 is a substrate binding site. 2 residues coordinate Zn(2+): cysteine 116 and cysteine 119. Tyrosine 124 lines the substrate pocket. One can recognise a Nudix hydrolase domain in the interval 125–248; it reads PQIAPCIIVA…TVARRLIEDT (124 aa). A divalent metal cation is bound by residues alanine 158, glutamate 174, and glutamate 178. A Nudix box motif is present at residues 159 to 180; that stretch reads GFVEVGETLEQAVAREVMEESG. Residue 192–199 participates in substrate binding; the sequence is QPWPFPQS. Glutamate 219 lines the a divalent metal cation pocket. Substrate is bound at residue alanine 241.

This sequence belongs to the Nudix hydrolase family. NudC subfamily. In terms of assembly, homodimer. Requires Mg(2+) as cofactor. Mn(2+) serves as cofactor. Zn(2+) is required as a cofactor.

The catalysed reaction is a 5'-end NAD(+)-phospho-ribonucleoside in mRNA + H2O = a 5'-end phospho-adenosine-phospho-ribonucleoside in mRNA + beta-nicotinamide D-ribonucleotide + 2 H(+). It carries out the reaction NAD(+) + H2O = beta-nicotinamide D-ribonucleotide + AMP + 2 H(+). It catalyses the reaction NADH + H2O = reduced beta-nicotinamide D-ribonucleotide + AMP + 2 H(+). Its function is as follows. mRNA decapping enzyme that specifically removes the nicotinamide adenine dinucleotide (NAD) cap from a subset of mRNAs by hydrolyzing the diphosphate linkage to produce nicotinamide mononucleotide (NMN) and 5' monophosphate mRNA. The NAD-cap is present at the 5'-end of some mRNAs and stabilizes RNA against 5'-processing. Has preference for mRNAs with a 5'-end purine. Catalyzes the hydrolysis of a broad range of dinucleotide pyrophosphates. In Shigella boydii serotype 18 (strain CDC 3083-94 / BS512), this protein is NAD-capped RNA hydrolase NudC.